Here is a 372-residue protein sequence, read N- to C-terminus: Glutamate 5-kinase (372 aa).

Lys-14 lines the ATP pocket. Substrate is bound by residues Ser-54, Asp-141, and Asn-153. 173 to 174 (TD) lines the ATP pocket. The PUA domain occupies 280-358 (RGTLVLDAGA…DAIEKLLGYV (79 aa)).

This sequence belongs to the glutamate 5-kinase family.

Its subcellular location is the cytoplasm. It carries out the reaction L-glutamate + ATP = L-glutamyl 5-phosphate + ADP. It participates in amino-acid biosynthesis; L-proline biosynthesis; L-glutamate 5-semialdehyde from L-glutamate: step 1/2. In terms of biological role, catalyzes the transfer of a phosphate group to glutamate to form L-glutamate 5-phosphate. The polypeptide is Glutamate 5-kinase (Ectopseudomonas mendocina (strain ymp) (Pseudomonas mendocina)).